Consider the following 267-residue polypeptide: Glutamate racemase (267 aa).

Residues Asp13 to Ser14 and Tyr45 to Ser46 contribute to the substrate site. Cys77 (proton donor/acceptor) is an active-site residue. Asn78–Thr79 is a substrate binding site. Cys188 functions as the Proton donor/acceptor in the catalytic mechanism. Thr189–His190 serves as a coordination point for substrate.

The protein belongs to the aspartate/glutamate racemases family.

The enzyme catalyses L-glutamate = D-glutamate. It participates in cell wall biogenesis; peptidoglycan biosynthesis. Functionally, provides the (R)-glutamate required for cell wall biosynthesis. The protein is Glutamate racemase of Histophilus somni (strain 2336) (Haemophilus somnus).